We begin with the raw amino-acid sequence, 221 residues long: ATP phosphoribosyltransferase (221 aa).

The protein belongs to the ATP phosphoribosyltransferase family. Short subfamily. Heteromultimer composed of HisG and HisZ subunits.

It localises to the cytoplasm. The catalysed reaction is 1-(5-phospho-beta-D-ribosyl)-ATP + diphosphate = 5-phospho-alpha-D-ribose 1-diphosphate + ATP. The protein operates within amino-acid biosynthesis; L-histidine biosynthesis; L-histidine from 5-phospho-alpha-D-ribose 1-diphosphate: step 1/9. Catalyzes the condensation of ATP and 5-phosphoribose 1-diphosphate to form N'-(5'-phosphoribosyl)-ATP (PR-ATP). Has a crucial role in the pathway because the rate of histidine biosynthesis seems to be controlled primarily by regulation of HisG enzymatic activity. This is ATP phosphoribosyltransferase from Anaeromyxobacter dehalogenans (strain 2CP-C).